A 198-amino-acid chain; its full sequence is Protein GrpE (198 aa).

The segment covering 1-27 (MEERNEQVVEETKEAQTEEATIEKNSE) has biased composition (basic and acidic residues). Residues 1-39 (MEERNEQVVEETKEAQTEEATIEKNSEESVTEEATEETV) form a disordered region. Over residues 29 to 39 (SVTEEATEETV) the composition is skewed to acidic residues.

Belongs to the GrpE family. Homodimer.

It localises to the cytoplasm. Its function is as follows. Participates actively in the response to hyperosmotic and heat shock by preventing the aggregation of stress-denatured proteins, in association with DnaK and GrpE. It is the nucleotide exchange factor for DnaK and may function as a thermosensor. Unfolded proteins bind initially to DnaJ; upon interaction with the DnaJ-bound protein, DnaK hydrolyzes its bound ATP, resulting in the formation of a stable complex. GrpE releases ADP from DnaK; ATP binding to DnaK triggers the release of the substrate protein, thus completing the reaction cycle. Several rounds of ATP-dependent interactions between DnaJ, DnaK and GrpE are required for fully efficient folding. This Bacillus cytotoxicus (strain DSM 22905 / CIP 110041 / 391-98 / NVH 391-98) protein is Protein GrpE.